The chain runs to 98 residues: Defensin-A (98 aa).

A signal peptide spans 1–18 (MKSITVICFLALCTVAIT). Residues 19–58 (SAYPQEPVLADEARPFANSLFDELPEETYQAAVENFRLKR) constitute a propeptide that is removed on maturation. Intrachain disulfides connect Cys-61/Cys-88, Cys-74/Cys-94, and Cys-78/Cys-96.

It belongs to the invertebrate defensin family. Type 1 subfamily.

The protein localises to the secreted. In terms of biological role, antibacterial peptide mostly active against Gram-positive bacteria. Has activity against the bacteria Gram-negative E.cloacae beta12. In Aedes aegypti (Yellowfever mosquito), this protein is Defensin-A (DEFA).